A 631-amino-acid polypeptide reads, in one-letter code: Phosphomethylpyrimidine synthase (631 aa).

Substrate-binding positions include N239, M268, Y297, H333, 353 to 355 (SRG), 394 to 397 (DGLR), and E433. H437 is a Zn(2+) binding site. Y460 is a binding site for substrate. H501 contributes to the Zn(2+) binding site. [4Fe-4S] cluster contacts are provided by C581, C584, and C589.

The protein belongs to the ThiC family. Homodimer. [4Fe-4S] cluster serves as cofactor.

The enzyme catalyses 5-amino-1-(5-phospho-beta-D-ribosyl)imidazole + S-adenosyl-L-methionine = 4-amino-2-methyl-5-(phosphooxymethyl)pyrimidine + CO + 5'-deoxyadenosine + formate + L-methionine + 3 H(+). The protein operates within cofactor biosynthesis; thiamine diphosphate biosynthesis. Its function is as follows. Catalyzes the synthesis of the hydroxymethylpyrimidine phosphate (HMP-P) moiety of thiamine from aminoimidazole ribotide (AIR) in a radical S-adenosyl-L-methionine (SAM)-dependent reaction. The polypeptide is Phosphomethylpyrimidine synthase (Escherichia coli O139:H28 (strain E24377A / ETEC)).